A 152-amino-acid polypeptide reads, in one-letter code: Large ribosomal subunit protein bL9 (152 aa).

This sequence belongs to the bacterial ribosomal protein bL9 family.

Its function is as follows. Binds to the 23S rRNA. The polypeptide is Large ribosomal subunit protein bL9 (Prochlorococcus marinus (strain NATL2A)).